The following is a 119-amino-acid chain: uncharacterized protein (119 aa).

Residues 78–119 (SHRKSQQHQTQGNQVLRGTRKLESPTVGPRPGLRRQHTRNFL) are disordered. Over residues 84–93 (QHQTQGNQVL) the composition is skewed to polar residues. Residues 109–119 (GLRRQHTRNFL) are compositionally biased toward basic residues.

This is an uncharacterized protein from Saccharomyces cerevisiae (strain ATCC 204508 / S288c) (Baker's yeast).